Here is an 875-residue protein sequence, read N- to C-terminus: Transcription factor tenR (875 aa).

The zn(2)-C6 fungal-type DNA-binding region spans 16 to 44 (CSECRRRKIRCDRGFPCGPCRKSLPALSC). 3 disordered regions span residues 54–73 (AASA…PKVN), 136–172 (DHEK…GVNP), and 620–642 (PHED…TGSR). Composition is skewed to polar residues over residues 153–168 (PGST…SHSA) and 627–642 (SIQS…TGSR).

The protein localises to the nucleus. Transcription factor that positively regulates the expression of the genes that mediate the biosynthesis of tenellin-type 2-pyridones, iron-chelating compounds involved in iron stress tolerance, competition with the natural competitor fungus Metarhizium robertsii and insect hosts infection. The sequence is that of Transcription factor tenR from Beauveria bassiana (strain ARSEF 2860) (White muscardine disease fungus).